We begin with the raw amino-acid sequence, 87 residues long: Small ribosomal subunit protein bS20 (87 aa).

A disordered region spans residues 1 to 21 (MANIKQQIKRNKTNEKRRLKN). The segment covering 7–20 (QIKRNKTNEKRRLK) has biased composition (basic residues).

It belongs to the bacterial ribosomal protein bS20 family.

Functionally, binds directly to 16S ribosomal RNA. This is Small ribosomal subunit protein bS20 from Phytoplasma mali (strain AT).